We begin with the raw amino-acid sequence, 317 residues long: TPR repeat-containing thioredoxin TDX (317 aa).

The segment at 1–48 (MATAGASSFEDEIMESDIELEGEAVEPDNDPPQKMGDPSVEVSDEKRD) is disordered. Acidic residues predominate over residues 9–29 (FEDEIMESDIELEGEAVEPDN). TPR repeat units follow at residues 50–83 (AQLC…NPTS), 85–117 (IAYA…NPDS), and 119–151 (KGYK…DYDE). One can recognise a Thioredoxin domain in the interval 189–316 (EKQRKHAEEV…LERKVAQHGS (128 aa)). Active-site nucleophile residues include C242 and C245. A disulfide bridge links C242 with C245.

Belongs to the thioredoxin family.

Probable thiol-disulfide oxidoreductase that may participate in various redox reactions and act as chaperone under heat shock. May interact with HSP70 proteins through the TPR repeats. This Oryza sativa subsp. japonica (Rice) protein is TPR repeat-containing thioredoxin TDX.